An 810-amino-acid polypeptide reads, in one-letter code: Transitional endoplasmic reticulum ATPase homolog 2 (810 aa).

ATP contacts are provided by residues 252 to 258, asparagine 353, histidine 389, and 526 to 531; these read PGTGKTL and GCGKTL. Positions 713 to 727 are enriched in basic and acidic residues; that stretch reads RQEKERQDRSARGEE. Disordered stretches follow at residues 713-732 and 777-810; these read RQEK…MEDE and FGNN…DLYN. Positions 793–802 are enriched in gly residues; it reads PVGGNGGSGG. Residues 805–810 form an interaction with ufd-2 region; it reads DDDLYN.

Belongs to the AAA ATPase family. CDC48 subfamily. As to quaternary structure, homohexamer; oligomerization is ATP-independent. Forms a ring-shaped particle of 18.3 nm diameter, that displays 6-fold radial symmetry. Interacts with cdc-48.1 and thus may form heterohexamers. Forms a complex composed of ubxn-3, cdc-48.1 and/or cdc-48.2 and substrate cdt-1. Interacts (via N-terminus) with ubxn-3. Interacts (via N-terminus) with atx-3 (via RRDR motif). Interacts (via N-terminus) with ubxn-5. Interacts with ufd-1. Interacts (via DDDLYN motif) with ufd-2. Interacts (via N-terminus) with ubxn-1. Interacts (via N-terminus) with ubxn-2. Interacts (via N-terminus) with ubxn-4. Interacts with ubxn-6. As to expression, expressed in body wall muscles.

The protein resides in the cytoplasm. The enzyme catalyses ATP + H2O = ADP + phosphate + H(+). The first ATP-binding region has low ATPase activity. The second ATP-binding region is responsible for ATPase activity. ATP binding to the first ATP-binding region induces intrinsic activity of the second ATP-binding region. While ATP binding to the first ATP-binding region appears to prevent ATP hydrolysis by the second ATP-binding region, ADP-binding to first region promotes the coordinate and cooperative ATPase cycle of the second ATP-binding region. ATP binding to the first ATP-binding region induces a conformational change, promoting the rotation of the first ATP-binding region relative to the second ATP-binding region in the hexamer. Inhibited by N-ethylmaleimide (NEM). Its function is as follows. ATP-dependent chaperone which probably uses the energy provided by ATP hydrolysis to generate mechanical force to unfold substrate proteins, disassemble protein complexes, and disaggregate protein aggregates. However, able to prevent aggregation of unfolded proteins also in an ATP-independent manner. Targets polyubiquitinated proteins for proteasomal degradation by binding to 'Lys-48'-linked polyubiquitin chains. Involved in the cytoplasmic elimination of misfolded proteins exported from the ER. This pathway, known as ERAD, prevents the activation of the unfolded protein response (UPR) caused by the accumulation of misfolded proteins in the ER. Together with udf-2 and chn-1, regulates myosin assembly in body wall muscles by targeting myosin chaperone unc-45 for proteasomal degradation. During oocyte meiosis and together with cdc-48.1, required for chromosome condensation at the diakinesis phase in prophase I and for progression of metaphase I. During the first embryonic cell division, regulates DNA replication and thus chromosome segregation and decondensation, and nuclear envelope re-assembly. In S phase and in association with ufd-1, npl-4.1 and/or npl-4.2 and ubxn-3, ensures the degradation of DNA licensing factor cdt-1 after the initiation of DNA replication and thus the disassembly of the DNA replication CMG helicase complex by promoting the dissociation from chromatin of several of its components including cdc-45 and sld-5. Regulates ubxn-3 nuclear localization during S phase. During the first embryonic cell divisions and together with cdc-48.1, regulates the re-assembly of the nuclear envelope after mitosis possibly by inactivating kinase air-2, a component of the chromosomal passenger complex (CPC). The polypeptide is Transitional endoplasmic reticulum ATPase homolog 2 (cdc-48.2) (Caenorhabditis elegans).